The sequence spans 149 residues: General odorant-binding protein 57c (149 aa).

The N-terminal stretch at 1 to 16 is a signal peptide; the sequence is MLKLWLICILTVSVVS. 3 disulfide bridges follow: Cys-32–Cys-70, Cys-66–Cys-117, and Cys-106–Cys-126.

It belongs to the PBP/GOBP family.

Present in the aqueous fluid surrounding olfactory sensory dendrites and are thought to aid in the capture and transport of hydrophobic odorants into and through this fluid. The polypeptide is General odorant-binding protein 57c (Drosophila melanogaster (Fruit fly)).